The primary structure comprises 471 residues: Ubiquitin-conjugating enzyme E2 variant 3 (471 aa).

The 144-residue stretch at 2 to 145 (EFDCEGLRRL…QEELPMYSLS (144 aa)) folds into the UEV domain. Position 191-219 (191-219 (GELGIACTLAISAKGIADRLVLLDLSEGT)) interacts with NAD(+).

This sequence in the N-terminal section; belongs to the ubiquitin-conjugating enzyme family. UEV subfamily. In the C-terminal section; belongs to the LDH/MDH superfamily. Homodimer. In terms of tissue distribution, colon, colon carcinoma cell lines, normal cervical epithelium, carcinomas of the uterine cervix and peripheral blood leukocytes.

Functionally, possible negative regulator of polyubiquitination. The sequence is that of Ubiquitin-conjugating enzyme E2 variant 3 from Homo sapiens (Human).